Consider the following 372-residue polypeptide: Alanine racemase (372 aa).

The Proton acceptor; specific for D-alanine role is filled by K33. K33 carries the N6-(pyridoxal phosphate)lysine modification. R131 lines the substrate pocket. Y261 serves as the catalytic Proton acceptor; specific for L-alanine. M309 is a substrate binding site.

The protein belongs to the alanine racemase family. It depends on pyridoxal 5'-phosphate as a cofactor.

It catalyses the reaction L-alanine = D-alanine. It functions in the pathway amino-acid biosynthesis; D-alanine biosynthesis; D-alanine from L-alanine: step 1/1. Functionally, catalyzes the interconversion of L-alanine and D-alanine. May also act on other amino acids. This chain is Alanine racemase (alr), found in Salinispora arenicola (strain CNS-205).